A 444-amino-acid chain; its full sequence is E1B 55 kDa protein (444 aa).

The segment at 1–27 (MEQDSDLESGRATNQRPPRVRVRGAGV) is disordered. A phosphoserine mark is found at S438 and S439.

It belongs to the adenoviridae E1B 55 kDa protein family. As to quaternary structure, interacts with host PML-4 and PML-5; this interaction promotes efficient subnuclear targeting of E1B-55K to PML nuclear bodies. Interacts with E4-ORF3 protein. Interacts with E4-ORF6 protein.

It is found in the host nucleus. It localises to the host cytoplasm. In terms of biological role, plays a major role to prevent cellular inhibition of viral genome replication. Assembles an SCF-like E3 ubiquitin ligase complex based on the cellular proteins ELOB, ELOC, CUL5 and RBX1, in cooperation with viral E4orf6. This viral RING-type ligase ubiquitinates cellular substrates and targets them to proteasomal degradation: TP53/p53, LIG4, MRE11-RAD50-NBS1 (MRN) complex, ITGA3, DAXX and BLM. E1B-55K probably acts as the substrate-specific adapter of the SCF-like E3 ubiquitin ligase complex. Degradation of host TP53/p53 activity is essential for preventing E1A-induced TP53 accumulation that would otherwise lead to cell apoptosis and growth arrest. E1B-55K also inactivates TP53 transcription-factor activity by binding its transactivation domain. E1B-55K also functions as a SUMO1 E3 ligase for TP53 which causes the latter to be sequestered in promyelocytic leukemia (PML) nuclear bodies thereby contributing to maximal inhibition of TP53 function. This chain is E1B 55 kDa protein, found in Canis lupus familiaris (Dog).